Reading from the N-terminus, the 359-residue chain is Putative mannose-1-phosphate guanyltransferase (359 aa).

The protein belongs to the transferase hexapeptide repeat family.

It catalyses the reaction alpha-D-mannose 1-phosphate + GTP + H(+) = GDP-alpha-D-mannose + diphosphate. The protein is Putative mannose-1-phosphate guanyltransferase (mpg1) of Sulfolobus acidocaldarius (strain ATCC 33909 / DSM 639 / JCM 8929 / NBRC 15157 / NCIMB 11770).